Here is a 450-residue protein sequence, read N- to C-terminus: Signal recognition particle 54 kDa protein (450 aa).

Residues 107-114 (GIQGSGKT), 188-192 (DTAGR), and 247-250 (TKLD) each bind GTP.

The protein belongs to the GTP-binding SRP family. SRP54 subfamily. As to quaternary structure, part of the signal recognition particle protein translocation system, which is composed of SRP and FtsY. Archaeal SRP consists of a 7S RNA molecule of 300 nucleotides and two protein subunits: SRP54 and SRP19.

The protein localises to the cytoplasm. The catalysed reaction is GTP + H2O = GDP + phosphate + H(+). In terms of biological role, involved in targeting and insertion of nascent membrane proteins into the cytoplasmic membrane. Binds to the hydrophobic signal sequence of the ribosome-nascent chain (RNC) as it emerges from the ribosomes. The SRP-RNC complex is then targeted to the cytoplasmic membrane where it interacts with the SRP receptor FtsY. The chain is Signal recognition particle 54 kDa protein from Methanococcus vannielii (strain ATCC 35089 / DSM 1224 / JCM 13029 / OCM 148 / SB).